Consider the following 122-residue polypeptide: Large ribosomal subunit protein uL14 (122 aa).

This sequence belongs to the universal ribosomal protein uL14 family. As to quaternary structure, part of the 50S ribosomal subunit. Forms a cluster with proteins L3 and L19. In the 70S ribosome, L14 and L19 interact and together make contacts with the 16S rRNA in bridges B5 and B8.

Binds to 23S rRNA. Forms part of two intersubunit bridges in the 70S ribosome. In Variovorax paradoxus (strain S110), this protein is Large ribosomal subunit protein uL14.